We begin with the raw amino-acid sequence, 75 residues long: Kappa-conotoxin RIIIK (75 aa).

The N-terminal stretch at 1 to 19 (MSKLGVLLTICLLLFPLTA) is a signal peptide. Positions 20 to 50 (LPMDGDQPVDRLAERMQDNISSEQHTFFEKR) are excised as a propeptide. 4-hydroxyproline occurs at positions 52, 63, 65, and 71. Cystine bridges form between cysteine 54–cysteine 67, cysteine 55–cysteine 72, and cysteine 62–cysteine 73. Position 74 is a threonine amide (threonine 74).

The protein belongs to the conotoxin M superfamily. In terms of tissue distribution, expressed by the venom duct.

The protein localises to the secreted. Functionally, kappa-conotoxins inhibits voltage-gated potassium channels (Kv). This synthetic toxin reversibly inhibits the insect potassium channel Shaker K+, the teleost homolog TSha1 and the mammalian Kv1.2/KCNA2 channel. Interacts with the pore region of the insect channel, in a state-dependent manner. Causes seizure when intracerebrovascularly injected into mice. Is also toxic when intrathecally injected into mice, but shows no visible effects by intraperitoneal injection. Shows protective effects on cardiac tissue when administered after an ischemic event. This chain is Kappa-conotoxin RIIIK, found in Conus radiatus (Rayed cone).